Here is a 155-residue protein sequence, read N- to C-terminus: Large ribosomal subunit protein bL9c (155 aa).

The protein belongs to the bacterial ribosomal protein bL9 family.

The protein resides in the plastid. The protein localises to the chloroplast. In terms of biological role, binds to the 23S rRNA. This Pyropia yezoensis (Susabi-nori) protein is Large ribosomal subunit protein bL9c.